Here is a 151-residue protein sequence, read N- to C-terminus: MHALQAKILDPRIGNEFPLPAYATVGSAGLDLRAMLKEDTLLEPGQTLLIPTGLSIYIGDPGLAALILPRSGLGHKHGIVLGNLVGLIDSDYQGELMVSCWNRGQTAFTIAVGERIAQLVLVPVVQARFELVEEFDESQRGTGGFGHSGSH.

Substrate-binding positions include 70-72, N83, 87-89, and M97; these read RSG and LID.

Belongs to the dUTPase family. Mg(2+) serves as cofactor.

It catalyses the reaction dUTP + H2O = dUMP + diphosphate + H(+). It participates in pyrimidine metabolism; dUMP biosynthesis; dUMP from dCTP (dUTP route): step 2/2. Functionally, this enzyme is involved in nucleotide metabolism: it produces dUMP, the immediate precursor of thymidine nucleotides and it decreases the intracellular concentration of dUTP so that uracil cannot be incorporated into DNA. The protein is Deoxyuridine 5'-triphosphate nucleotidohydrolase of Pseudomonas syringae pv. tomato (strain ATCC BAA-871 / DC3000).